Here is a 177-residue protein sequence, read N- to C-terminus: MSQLTTVARPYAKAAFDFALEQGQLDKWQEMLQFSALVAENEDVQHFIHSSSAATQVADTFIAICGDQLDQYGQNFIRVMAENKRLSALPSVFASFNQIRAEYESVKDVFVTSATPLTKAQEDKIAKAMKQKLNSEVRITTSIDASLIAGVIIRYDDVVIDGSSRGQLNRLSQELCL.

The protein belongs to the ATPase delta chain family. As to quaternary structure, F-type ATPases have 2 components, F(1) - the catalytic core - and F(0) - the membrane proton channel. F(1) has five subunits: alpha(3), beta(3), gamma(1), delta(1), epsilon(1). F(0) has three main subunits: a(1), b(2) and c(10-14). The alpha and beta chains form an alternating ring which encloses part of the gamma chain. F(1) is attached to F(0) by a central stalk formed by the gamma and epsilon chains, while a peripheral stalk is formed by the delta and b chains.

The protein localises to the cell inner membrane. F(1)F(0) ATP synthase produces ATP from ADP in the presence of a proton or sodium gradient. F-type ATPases consist of two structural domains, F(1) containing the extramembraneous catalytic core and F(0) containing the membrane proton channel, linked together by a central stalk and a peripheral stalk. During catalysis, ATP synthesis in the catalytic domain of F(1) is coupled via a rotary mechanism of the central stalk subunits to proton translocation. Functionally, this protein is part of the stalk that links CF(0) to CF(1). It either transmits conformational changes from CF(0) to CF(1) or is implicated in proton conduction. This chain is ATP synthase subunit delta, found in Glaesserella parasuis serovar 5 (strain SH0165) (Haemophilus parasuis).